Reading from the N-terminus, the 161-residue chain is Small ribosomal subunit protein uS9 (161 aa).

2 disordered regions span residues methionine 1–alanine 27 and lysine 142–arginine 161.

This sequence belongs to the universal ribosomal protein uS9 family.

In Clavibacter michiganensis subsp. michiganensis (strain NCPPB 382), this protein is Small ribosomal subunit protein uS9.